The chain runs to 928 residues: MLSRLSAVWRPSRVALRIQRVDFTTCGNRLNRSTQPNEPPLVSGIAARSRTAKAEPVEKRGRAAIKIDSPPPPLEPPRISEEHMTRRRKVGGGKTKAAAVTKSKQRRSGRTVGASAFNTARRANGIEGSAPGKGGASDVAIDDDDDEKLVDEESKQLMQLLKEEALRREEEKKKRLRAKAAAEPTEVTDDKEYLSKLGVAERTQPVGTEAKISAQGKAEGASEGQTHFSDADADSQLPILTSLSPEQQRALRLALKGRNLFITGGAGSGKSLLIREIVYQLRHNKRRCVYVTATTGVAALNVRGSTVNSFAGVKFGDGDARQLLKWVRRSRRAAGRWRYCQTLIIDEISMMDPLLLDKLDVIARAIRRRNEPFGGIQVILCGDFLQLPPIPPRNKPQQKTEENAEAQEGGDPTDGTPAPSKLQYCFETSTWTSLNLITVILHKKFRQHDDLAFQQVLDELRVGSLSPESYELLLSRTVASKSSAKSRKKKDEDAGNDGVLPLTDAETTPAAAEKDRHVRLCATNKEVEMRNAKYFAALEPKGLPIYPSPNDGSSQQTGSSNGANSVTEEDTMRPLQVYRAYDAYSTHETEPETTEETTTGTQPSQPWVRFEDSTLPTDLALKVGTRVMVLQNISLRLGLVNGSVGEVVGFLHPLELVELVLRAPRERHFPSARGQELLERAGLPTLQDAFRCVDTALGQSLFYYLRERGIRRPEDASYGCVYGNTHCRDILRLVGLGKTESANAVHPLEMYLGGIAPQHVRLTRLPIVRLDLREGNHTSSDSGAVEDGGFANGSKRLPKHVYAFISPSSHQWYMGDQPVATRTQLPLRQAWAMTVHKAQGLTISHVEVAIHRFFSPGQAYVALSRSTRLDNIRLLDFNNASVHACPRAKEFYTVLEEEELDNEIEDDGTEGDEEALEGDGEYEGEVEE.

Residues 1–49 (MLSRLSAVWRPSRVALRIQRVDFTTCGNRLNRSTQPNEPPLVSGIAARS) constitute a mitochondrion transit peptide. Disordered regions lie at residues 29-141 (RLNR…DVAI) and 176-231 (LRAK…FSDA). A compositionally biased stretch (basic and acidic residues) spans 52-61 (AKAEPVEKRG). 264–271 (GGAGSGKS) lines the ATP pocket. Disordered stretches follow at residues 389–421 (PIPP…APSK), 481–513 (KSSA…AAAE), 545–572 (IYPS…EDTM), and 585–607 (STHE…SQPW). Positions 550-566 (NDGSSQQTGSSNGANSV) are enriched in polar residues. The DNA-binding element occupies 858–877 (QAYVALSRSTRLDNIRLLDF). Positions 898–928 (EELDNEIEDDGTEGDEEALEGDGEYEGEVEE) are disordered.

Belongs to the helicase family. PIF1 subfamily. Monomer. It depends on Mg(2+) as a cofactor.

Its subcellular location is the mitochondrion. The catalysed reaction is Couples ATP hydrolysis with the unwinding of duplex DNA at the replication fork by translocating in the 5'-3' direction. This creates two antiparallel DNA single strands (ssDNA). The leading ssDNA polymer is the template for DNA polymerase III holoenzyme which synthesizes a continuous strand.. It catalyses the reaction ATP + H2O = ADP + phosphate + H(+). In terms of biological role, DNA-dependent ATPase and 5'-3' DNA helicase required for the maintenance of mitochondrial (kinetoplast) genome stability. Involved in processing of minicircle Okazaki fragments. This chain is ATP-dependent DNA helicase PIF5, found in Trypanosoma brucei brucei (strain 927/4 GUTat10.1).